We begin with the raw amino-acid sequence, 322 residues long: Probable 2-oxoglutarate-dependent dioxygenase AOP1 (322 aa).

The region spanning 165–271 is the Fe2OG dioxygenase domain; the sequence is TYYLTRLMKY…RYSTGLFSIP (107 aa). Fe cation is bound by residues H195, D197, and H252. A 2-oxoglutarate-binding site is contributed by R262.

The protein belongs to the iron/ascorbate-dependent oxidoreductase family. Requires Fe(2+) as cofactor.

Its function is as follows. Probable 2-oxoglutarate-dependent dioxygenase that may be involved in glucosinolates biosynthesis. May play a role in the production of aliphatic glucosinolates. This is Probable 2-oxoglutarate-dependent dioxygenase AOP1 (AOP1) from Arabidopsis thaliana (Mouse-ear cress).